Reading from the N-terminus, the 78-residue chain is Serine--glyoxylate aminotransferase (78 aa).

This sequence belongs to the class-V pyridoxal-phosphate-dependent aminotransferase family. As to quaternary structure, homodimer. Pyridoxal 5'-phosphate is required as a cofactor. In terms of tissue distribution, expressed in leaves but not in root tissue or seedlings.

The protein resides in the peroxisome. The enzyme catalyses glyoxylate + L-serine = 3-hydroxypyruvate + glycine. It catalyses the reaction glyoxylate + L-alanine = glycine + pyruvate. Inhibited by aminooxyacetate. The polypeptide is Serine--glyoxylate aminotransferase (Triticum aestivum (Wheat)).